A 790-amino-acid polypeptide reads, in one-letter code: Cadherin-6 (790 aa).

Residues 1–18 (MRTYRYFLLLFWVGQPYP) form the signal peptide. Residues 19 to 53 (TFSTPLSKRTSGFPAKKRTLELSGNSKNELSRSKR) constitute a propeptide that is removed on maturation. Cadherin domains follow at residues 54–159 (SWMW…EPIF), 160–268 (TKEV…PPRF), 269–383 (PQST…PPVF), 384–486 (SKLA…DNPP), and 487–608 (EFAE…LVHP). Over 54 to 615 (SWMWNQFFLL…VHPTGLSTGA (562 aa)) the chain is Extracellular. Residue N255 is glycosylated (N-linked (GlcNAc...) asparagine). A disordered region spans residues 261–291 (VNDNPPRFPQSTYQFKTPESSPPGTPIGRIK). The segment covering 269-279 (PQSTYQFKTPE) has biased composition (polar residues). N-linked (GlcNAc...) asparagine glycosylation is found at N399, N437, N455, and N536. The chain crosses the membrane as a helical span at residues 616 to 636 (LIAILLCIVTLLVTVVLFAAL). Residues 637-790 (RRQRKKEPLI…YGGVDSDKDS (154 aa)) lie on the Cytoplasmic side of the membrane. Phosphoserine occurs at positions 786 and 790.

Its subcellular location is the cell membrane. Cadherins are calcium-dependent cell adhesion proteins. They preferentially interact with themselves in a homophilic manner in connecting cells; cadherins may thus contribute to the sorting of heterogeneous cell types. The polypeptide is Cadherin-6 (CDH6) (Bos taurus (Bovine)).